The chain runs to 1037 residues: Probable aminoglycoside efflux pump (1037 aa).

Residues 1–9 (MANFFIDRP) are Cytoplasmic-facing. A helical transmembrane segment spans residues 10 to 28 (IFAWVLAILLCLTGTLAIF). Residues 29-339 (SLPVEQYPDL…TSFVKASIED (311 aa)) lie on the Periplasmic side of the membrane. A helical transmembrane segment spans residues 340–359 (VVKTLLEAIALVFLVMYLFL). Residues 360 to 365 (QNFRAT) lie on the Cytoplasmic side of the membrane. Residues 366-385 (LIPTIAVPVVLMGTFSVLYA) form a helical membrane-spanning segment. Over 386 to 391 (FGYSVN) the chain is Periplasmic. A helical transmembrane segment spans residues 392-413 (TLTMFAMVLAIGLLVDDAIVVV). The Cytoplasmic segment spans residues 414-441 (ENVERIMSEEGLTPREATRKSMGQIQGA). Residues 442-460 (LVGIAMVLSAVFVPMAFFG) traverse the membrane as a helical segment. Residues 461 to 473 (GTTGAIYRQFSIT) are Periplasmic-facing. Residues 474–496 (IVAAMVLSVLVAMILTPALCATL) form a helical membrane-spanning segment. Residues 497 to 537 (LKPLKKGEHHGQKGFFAWFNQMFNRNAERYEKGVAKILHRS) lie on the Cytoplasmic side of the membrane. The chain crosses the membrane as a helical span at residues 538 to 556 (LRWIVIYVLLLGGMVFLFL). Topologically, residues 557–870 (RLPTSFLPLE…SYQERLSGAQ (314 aa)) are periplasmic. Residues 871–890 (APALYAISLLVVFLCLAALY) form a helical membrane-spanning segment. Topologically, residues 891–896 (ESWSVP) are cytoplasmic. A helical membrane pass occupies residues 897-916 (FSVMLVVPLGVIGALLATWM). Over 917–922 (RGLEND) the chain is Periplasmic. Residues 923-944 (VYFQVGLLTVIGLSAKNAILIV) form a helical membrane-spanning segment. Topologically, residues 945-971 (EFANEMNQKGHDLFEATLHACRQRLRP) are cytoplasmic. Residues 972–990 (ILMTSLAFIFGVLPMATST) form a helical membrane-spanning segment. The Periplasmic segment spans residues 991-1003 (GAGSGGQHAVGTG). Residues 1004-1026 (VMGGMISATILAIYFVPLFFVLV) form a helical membrane-spanning segment. Over 1027–1037 (RRRFPLKPRPE) the chain is Cytoplasmic.

The protein belongs to the resistance-nodulation-cell division (RND) (TC 2.A.6) family.

It is found in the cell inner membrane. Its function is as follows. Participates in the efflux of aminoglycosides. Confers resistance to a variety of these substances. This chain is Probable aminoglycoside efflux pump (acrD), found in Escherichia coli (strain K12).